Reading from the N-terminus, the 341-residue chain is L-threonine 3-dehydrogenase (341 aa).

Zn(2+) is bound at residue cysteine 38. Catalysis depends on charge relay system residues threonine 40 and histidine 43. Residues histidine 63, glutamate 64, cysteine 93, cysteine 96, cysteine 99, and cysteine 107 each coordinate Zn(2+). Residues isoleucine 175, aspartate 195, arginine 200, 262–264, and 286–287 each bind NAD(+); these read LGI and IY.

The protein belongs to the zinc-containing alcohol dehydrogenase family. As to quaternary structure, homotetramer. Zn(2+) serves as cofactor.

It localises to the cytoplasm. It carries out the reaction L-threonine + NAD(+) = (2S)-2-amino-3-oxobutanoate + NADH + H(+). Its pathway is amino-acid degradation; L-threonine degradation via oxydo-reductase pathway; glycine from L-threonine: step 1/2. Functionally, catalyzes the NAD(+)-dependent oxidation of L-threonine to 2-amino-3-ketobutyrate. In Chromobacterium violaceum (strain ATCC 12472 / DSM 30191 / JCM 1249 / CCUG 213 / NBRC 12614 / NCIMB 9131 / NCTC 9757 / MK), this protein is L-threonine 3-dehydrogenase.